Consider the following 79-residue polypeptide: uncharacterized protein (79 aa).

The signal sequence occupies residues 1–24 (MKMNPCTVILCKSLFFFCLFQVDC). Asn33 carries N-linked (GlcNAc...) asparagine glycosylation.

Its subcellular location is the secreted. This is an uncharacterized protein from Saccharomyces cerevisiae (strain ATCC 204508 / S288c) (Baker's yeast).